Consider the following 150-residue polypeptide: Urease accessory protein UreE (150 aa).

Belongs to the UreE family.

It localises to the cytoplasm. In terms of biological role, involved in urease metallocenter assembly. Binds nickel. Probably functions as a nickel donor during metallocenter assembly. The chain is Urease accessory protein UreE from Staphylococcus epidermidis (strain ATCC 35984 / DSM 28319 / BCRC 17069 / CCUG 31568 / BM 3577 / RP62A).